Here is a 237-residue protein sequence, read N- to C-terminus: uncharacterized protein (237 aa).

Residues 1–28 (MNRPLLSVAGSLFVAAWALYIFSCFQHG) form the signal peptide. Residues 52–96 (NARDTAAHPSDTADNTSGSSTTTDPRSHGNAPPAPVGGAAQTHTQ) form a disordered region. Residues 63 to 75 (TADNTSGSSTTTD) are compositionally biased toward polar residues.

This is an uncharacterized protein from Treponema pallidum (strain Nichols).